Here is a 221-residue protein sequence, read N- to C-terminus: Adenylate kinase (221 aa).

Residue 10-15 coordinates ATP; sequence GAGKGT. An NMP region spans residues 30–59; the sequence is STGDMLRAAVKAGTPLGLEAKRYMDAGELV. AMP contacts are provided by residues threonine 31, arginine 36, 57-59, 85-88, and glutamine 92; these read ELV and GFPR. Residues 122-159 form an LID region; the sequence is GRRMHPASGRTYHVKFNPPKVEGVDDVTGEPLIQRDDD. ATP contacts are provided by residues arginine 123 and 132–133; that span reads TY. AMP is bound by residues arginine 156 and arginine 167. ATP is bound at residue glycine 207.

This sequence belongs to the adenylate kinase family. Monomer.

It localises to the cytoplasm. The catalysed reaction is AMP + ATP = 2 ADP. The protein operates within purine metabolism; AMP biosynthesis via salvage pathway; AMP from ADP: step 1/1. Catalyzes the reversible transfer of the terminal phosphate group between ATP and AMP. Plays an important role in cellular energy homeostasis and in adenine nucleotide metabolism. The sequence is that of Adenylate kinase from Paraburkholderia phymatum (strain DSM 17167 / CIP 108236 / LMG 21445 / STM815) (Burkholderia phymatum).